The chain runs to 364 residues: MSNPRVYFDITIGNKPEGRIVFELFKDIVPKTAENFRALCTGEKGEGKSGKPLSYQGSLFHRIIKNFMIQGGDFTAGNGTGGESIYGEKFEDENFVLKHEKPFLLSMANAGPGTNGSQFFITTVPTPHLDGKHVVFGKVLKGKAVVRALENLETVSDRPVEDAVIAKCGELAEGEDDGIRASEDGDVYEEYPDDHEGPKEPNDVLQIATHLKDIGNTYFKKGDHANAAKKYLKAIRYLNEKPAFDENDPKELEGKFAAIKIPCYLNRSMCALKLGEYSECVKVTTTVLEYDSKYLKPTDITKAYFRRGSAKMNTRDFEGAIEDFEKAHEKDPEDAGIKKELANAKAKLAAKKQKEKSAYAKMFA.

The region spanning 7–170 is the PPIase cyclophilin-type domain; it reads YFDITIGNKP…EDAVIAKCGE (164 aa). 3 TPR repeats span residues 208–241, 261–294, and 301–334; these read ATHLKDIGNTYFKKGDHANAAKKYLKAIRYLNEK, IPCYLNRSMCALKLGEYSECVKVTTTVLEYDSKY, and TKAYFRRGSAKMNTRDFEGAIEDFEKAHEKDPED.

Belongs to the cyclophilin-type PPIase family. PPIase D subfamily.

It is found in the cytoplasm. The catalysed reaction is [protein]-peptidylproline (omega=180) = [protein]-peptidylproline (omega=0). In terms of biological role, PPIases accelerate the folding of proteins. It catalyzes the cis-trans isomerization of proline imidic peptide bonds in oligopeptides. The polypeptide is Peptidyl-prolyl cis-trans isomerase D (cyp12) (Rhizopus delemar (strain RA 99-880 / ATCC MYA-4621 / FGSC 9543 / NRRL 43880) (Mucormycosis agent)).